The sequence spans 293 residues: Ribosomal protein L11 methyltransferase (293 aa).

Positions 146, 167, 189, and 230 each coordinate S-adenosyl-L-methionine.

It belongs to the methyltransferase superfamily. PrmA family.

It localises to the cytoplasm. It carries out the reaction L-lysyl-[protein] + 3 S-adenosyl-L-methionine = N(6),N(6),N(6)-trimethyl-L-lysyl-[protein] + 3 S-adenosyl-L-homocysteine + 3 H(+). Methylates ribosomal protein L11. The sequence is that of Ribosomal protein L11 methyltransferase from Colwellia psychrerythraea (strain 34H / ATCC BAA-681) (Vibrio psychroerythus).